We begin with the raw amino-acid sequence, 118 residues long: Large ribosomal subunit protein uL24 (118 aa).

It belongs to the universal ribosomal protein uL24 family. Part of the 50S ribosomal subunit.

Functionally, one of two assembly initiator proteins, it binds directly to the 5'-end of the 23S rRNA, where it nucleates assembly of the 50S subunit. Its function is as follows. One of the proteins that surrounds the polypeptide exit tunnel on the outside of the subunit. The sequence is that of Large ribosomal subunit protein uL24 from Prochlorococcus marinus (strain MIT 9313).